The sequence spans 536 residues: CTP synthase (536 aa).

The tract at residues 1-267 (MTKFIFVTGG…DDIVIKRLQL (267 aa)) is amidoligase domain. S13 serves as a coordination point for CTP. S13 is a UTP binding site. 14–19 (SLGKGI) is a binding site for ATP. Y54 is a binding site for L-glutamine. D71 provides a ligand contact to ATP. The Mg(2+) site is built by D71 and E141. CTP-binding positions include 148-150 (DIE), 188-193 (KTKPTQ), and K224. Residues 188 to 193 (KTKPTQ) and K224 contribute to the UTP site. 240–242 (RDA) is an ATP binding site. The Glutamine amidotransferase type-1 domain occupies 293–535 (TIGLVGKYVS…IEASLKYQQN (243 aa)). G355 provides a ligand contact to L-glutamine. C382 (nucleophile; for glutamine hydrolysis) is an active-site residue. L-glutamine is bound by residues 383–386 (LGMQ), E406, and R463. Active-site residues include H508 and E510.

It belongs to the CTP synthase family. In terms of assembly, homotetramer.

It catalyses the reaction UTP + L-glutamine + ATP + H2O = CTP + L-glutamate + ADP + phosphate + 2 H(+). It carries out the reaction L-glutamine + H2O = L-glutamate + NH4(+). The catalysed reaction is UTP + NH4(+) + ATP = CTP + ADP + phosphate + 2 H(+). The protein operates within pyrimidine metabolism; CTP biosynthesis via de novo pathway; CTP from UDP: step 2/2. With respect to regulation, allosterically activated by GTP, when glutamine is the substrate; GTP has no effect on the reaction when ammonia is the substrate. The allosteric effector GTP functions by stabilizing the protein conformation that binds the tetrahedral intermediate(s) formed during glutamine hydrolysis. Inhibited by the product CTP, via allosteric rather than competitive inhibition. Catalyzes the ATP-dependent amination of UTP to CTP with either L-glutamine or ammonia as the source of nitrogen. Regulates intracellular CTP levels through interactions with the four ribonucleotide triphosphates. This is CTP synthase from Staphylococcus aureus (strain NCTC 8325 / PS 47).